Consider the following 293-residue polypeptide: Ethanolamine ammonia-lyase small subunit (293 aa).

Residues Val207 and Glu228 each coordinate adenosylcob(III)alamin.

Belongs to the EutC family. The basic unit is a heterodimer which dimerizes to form tetramers. The heterotetramers trimerize; 6 large subunits form a core ring with 6 small subunits projecting outwards. Requires adenosylcob(III)alamin as cofactor.

It localises to the bacterial microcompartment. It catalyses the reaction ethanolamine = acetaldehyde + NH4(+). Its pathway is amine and polyamine degradation; ethanolamine degradation. Its function is as follows. Catalyzes the deamination of various vicinal amino-alcohols to oxo compounds. Allows this organism to utilize ethanolamine as the sole source of nitrogen and carbon in the presence of external vitamin B12. This chain is Ethanolamine ammonia-lyase small subunit, found in Listeria monocytogenes serotype 4a (strain HCC23).